The chain runs to 130 residues: Small ribosomal subunit protein uS9 (130 aa).

The disordered stretch occupies residues 105-130 (TRDSRMKERKKPGLRGARRAPQFSKR). The segment covering 111–130 (KERKKPGLRGARRAPQFSKR) has biased composition (basic residues).

The protein belongs to the universal ribosomal protein uS9 family.

This chain is Small ribosomal subunit protein uS9, found in Lysinibacillus sphaericus (strain C3-41).